Reading from the N-terminus, the 474-residue chain is Cysteine--tRNA ligase (474 aa).

C30 is a Zn(2+) binding site. The 'HIGH' region signature appears at 32 to 42 (PTVYNFAHIGN). 3 residues coordinate Zn(2+): C212, H237, and E241. The 'KMSKS' region motif lies at 270–274 (KMSKS). K273 serves as a coordination point for ATP.

It belongs to the class-I aminoacyl-tRNA synthetase family. In terms of assembly, monomer. Zn(2+) is required as a cofactor.

The protein localises to the cytoplasm. It catalyses the reaction tRNA(Cys) + L-cysteine + ATP = L-cysteinyl-tRNA(Cys) + AMP + diphosphate. This chain is Cysteine--tRNA ligase, found in Leptospira borgpetersenii serovar Hardjo-bovis (strain JB197).